We begin with the raw amino-acid sequence, 268 residues long: Interleukin-1 alpha (268 aa).

The propeptide occupies 1-112; sequence MAKVPDLFED…NTEEEIIKPR (112 aa). N6-acetyllysine is present on Lys-82. The interval 82-86 is nuclear localization signal (NLS); that stretch reads KKRRL. Ser-87 bears the Phosphoserine mark. 2 N-linked (GlcNAc...) asparagine glycosylation sites follow: Asn-102 and Asn-141.

This sequence belongs to the IL-1 family. Monomer. Interacts with TMED10; the interaction mediates the translocation from the cytoplasm into the ERGIC (endoplasmic reticulum-Golgi intermediate compartment) and thereby secretion. Interacts with IL1R1. Interacts with S100A13; this interaction is the first step in the export of IL1A, followed by direct translocation of this complex across the plasma membrane. In terms of processing, acetylated within its nuclear localization sequence, which impacts subcellular localization. Proteolytic processed by CAPN1 in a calcium-dependent manner. Cleavage from 31 kDa precursor to 18 kDa biologically active molecules. Post-translationally, phosphorylated. Phosphorylation greatly enhances susceptibility to digestion and promotes the conversion of pre-IL1A alpha to the biologically active IL1A.

Its subcellular location is the nucleus. The protein resides in the cytoplasm. It localises to the secreted. Cytokine constitutively present intracellularly in nearly all resting non-hematopoietic cells that plays an important role in inflammation and bridges the innate and adaptive immune systems. After binding to its receptor IL1R1 together with its accessory protein IL1RAP, forms the high affinity interleukin-1 receptor complex. Signaling involves the recruitment of adapter molecules such as MYD88, IRAK1 or IRAK4. In turn, mediates the activation of NF-kappa-B and the three MAPK pathways p38, p42/p44 and JNK pathways. Within the cell, acts as an alarmin and cell death results in its liberation in the extracellular space after disruption of the cell membrane to induce inflammation and alert the host to injury or damage. In addition to its role as a danger signal, which occurs when the cytokine is passively released by cell necrosis, directly senses DNA damage and acts as signal for genotoxic stress without loss of cell integrity. This chain is Interleukin-1 alpha (IL1A), found in Bubalus carabanensis (Swamp type water buffalo).